The primary structure comprises 534 residues: Zinc finger protein 703-A (534 aa).

3 disordered regions span residues 1-35 (MNCSPPGSSTDTERQSSSSGTPATPCPTLAPTHPV), 90-251 (SQIG…VAPV), and 300-320 (QLPGTLGLPGKPPSSSPLTGA). Composition is skewed to low complexity over residues 15-34 (QSSSSGTPATPCPTLAPTHP), 115-124 (RSSSLKLGES), and 146-155 (GSSAGGSADK). The span at 173–182 (SPSSRVSSPG) shows a compositional bias: polar residues. Over residues 185-200 (CDSKNNESQEKKEPEA) the composition is skewed to basic and acidic residues. Residues 204–217 (SLETSQANPTLTRA) show a composition bias toward polar residues. Residues 218 to 229 (SISNSSAESSQS) show a composition bias toward low complexity. Over residues 230–239 (GDVTPSSKSD) the composition is skewed to polar residues. A C2H2-type zinc finger spans residues 406-434 (HICNWVSASGPCDKRFATSEELLAHLRTH).

Belongs to the Elbow/Noc family.

It localises to the nucleus. It is found in the cytoplasm. Functionally, transcriptional corepressor which does not bind directly to DNA and may regulate transcription through recruitment of histone deacetylases to gene promoters. Regulates cell adhesion, migration and proliferation. Involved in specification of the lateral neural plate border (NPB). May be required for segmental gene expression during hindbrain development. The polypeptide is Zinc finger protein 703-A (znf703-a) (Xenopus laevis (African clawed frog)).